The sequence spans 506 residues: uncharacterized protein (506 aa).

This sequence belongs to the Mg-chelatase subunits D/I family. ComM subfamily.

This is an uncharacterized protein from Escherichia coli (strain K12).